We begin with the raw amino-acid sequence, 109 residues long: Phosphocarrier protein HPr (109 aa).

The region spanning 22–109 (ELSAVFTIRN…EVFNSGFGEL (88 aa)) is the HPr domain. Residue His36 is the Pros-phosphohistidine intermediate of the active site.

The protein belongs to the HPr family.

It is found in the cytoplasm. In terms of biological role, general (non sugar-specific) component of the phosphoenolpyruvate-dependent sugar phosphotransferase system (sugar PTS). This major carbohydrate active-transport system catalyzes the phosphorylation of incoming sugar substrates concomitantly with their translocation across the cell membrane. The phosphoryl group from phosphoenolpyruvate (PEP) is transferred to the phosphoryl carrier protein HPr by enzyme I. Phospho-HPr then transfers it to the PTS EIIA domain. This Chlamydia trachomatis serovar D (strain ATCC VR-885 / DSM 19411 / UW-3/Cx) protein is Phosphocarrier protein HPr (ptsH).